Reading from the N-terminus, the 446-residue chain is Methylenetetrahydrofolate--tRNA-(uracil-5-)-methyltransferase TrmFO (446 aa).

Position 11–16 (11–16) interacts with FAD; that stretch reads GGGLAG.

This sequence belongs to the MnmG family. TrmFO subfamily. FAD serves as cofactor.

The protein localises to the cytoplasm. The catalysed reaction is uridine(54) in tRNA + (6R)-5,10-methylene-5,6,7,8-tetrahydrofolate + NADH + H(+) = 5-methyluridine(54) in tRNA + (6S)-5,6,7,8-tetrahydrofolate + NAD(+). It carries out the reaction uridine(54) in tRNA + (6R)-5,10-methylene-5,6,7,8-tetrahydrofolate + NADPH + H(+) = 5-methyluridine(54) in tRNA + (6S)-5,6,7,8-tetrahydrofolate + NADP(+). Functionally, catalyzes the folate-dependent formation of 5-methyl-uridine at position 54 (M-5-U54) in all tRNAs. The polypeptide is Methylenetetrahydrofolate--tRNA-(uracil-5-)-methyltransferase TrmFO (Oleidesulfovibrio alaskensis (strain ATCC BAA-1058 / DSM 17464 / G20) (Desulfovibrio alaskensis)).